The sequence spans 316 residues: Glutathione synthetase (316 aa).

The ATP-grasp domain occupies 124–310 (EKLFTAWFPE…ITGKLMDAIE (187 aa)). 150 to 207 (FREEHGDVILKPLDGMGGASIFRVKENDPNVSVIIETLTNHGQNYAMAQTFVPDISNG) serves as a coordination point for ATP. Residues Glu-281 and Asn-283 each coordinate Mg(2+).

Belongs to the prokaryotic GSH synthase family. It depends on Mg(2+) as a cofactor. Requires Mn(2+) as cofactor.

The enzyme catalyses gamma-L-glutamyl-L-cysteine + glycine + ATP = glutathione + ADP + phosphate + H(+). It functions in the pathway sulfur metabolism; glutathione biosynthesis; glutathione from L-cysteine and L-glutamate: step 2/2. The chain is Glutathione synthetase from Vibrio parahaemolyticus serotype O3:K6 (strain RIMD 2210633).